A 171-amino-acid chain; its full sequence is Co-chaperone protein HscB (171 aa).

Residues 2-74 (DYFTLFGLPA…LTRAEYLLSL (73 aa)) enclose the J domain.

Belongs to the HscB family. As to quaternary structure, interacts with HscA and stimulates its ATPase activity. Interacts with IscU.

In terms of biological role, co-chaperone involved in the maturation of iron-sulfur cluster-containing proteins. Seems to help targeting proteins to be folded toward HscA. The polypeptide is Co-chaperone protein HscB (Salmonella paratyphi A (strain AKU_12601)).